A 92-amino-acid polypeptide reads, in one-letter code: Large ribosomal subunit protein bL28 (92 aa).

Belongs to the bacterial ribosomal protein bL28 family.

The polypeptide is Large ribosomal subunit protein bL28 (Borrelia duttonii (strain Ly)).